Here is a 250-residue protein sequence, read N- to C-terminus: NH(3)-dependent NAD(+) synthetase (250 aa).

31–38 (GISGGIDS) contacts ATP. D37 is a binding site for Mg(2+). R122 lines the deamido-NAD(+) pocket. T142 lines the ATP pocket. Mg(2+) is bound at residue E147. The deamido-NAD(+) site is built by K155 and D162. ATP contacts are provided by K171 and S193. A deamido-NAD(+)-binding site is contributed by 239–240 (HK).

This sequence belongs to the NAD synthetase family. As to quaternary structure, homodimer.

The enzyme catalyses deamido-NAD(+) + NH4(+) + ATP = AMP + diphosphate + NAD(+) + H(+). The protein operates within cofactor biosynthesis; NAD(+) biosynthesis; NAD(+) from deamido-NAD(+) (ammonia route): step 1/1. In terms of biological role, catalyzes the ATP-dependent amidation of deamido-NAD to form NAD. Uses ammonia as a nitrogen source. The chain is NH(3)-dependent NAD(+) synthetase from Alkaliphilus oremlandii (strain OhILAs) (Clostridium oremlandii (strain OhILAs)).